The sequence spans 312 residues: Porphobilinogen deaminase (312 aa).

Cys-241 bears the S-(dipyrrolylmethanemethyl)cysteine mark.

The protein belongs to the HMBS family. Monomer. Requires dipyrromethane as cofactor.

The catalysed reaction is 4 porphobilinogen + H2O = hydroxymethylbilane + 4 NH4(+). The protein operates within porphyrin-containing compound metabolism; protoporphyrin-IX biosynthesis; coproporphyrinogen-III from 5-aminolevulinate: step 2/4. It participates in porphyrin-containing compound metabolism; chlorophyll biosynthesis. Tetrapolymerization of the monopyrrole PBG into the hydroxymethylbilane pre-uroporphyrinogen in several discrete steps. The polypeptide is Porphobilinogen deaminase (hemC) (Chlorobaculum parvum (strain DSM 263 / NCIMB 8327) (Chlorobium vibrioforme subsp. thiosulfatophilum)).